Here is an 85-residue protein sequence, read N- to C-terminus: Probable Thioredoxin (85 aa).

Residues 2–85 enclose the Glutaredoxin domain; the sequence is VVNIEVFTSP…LFEAINDEME (84 aa). Residues cysteine 13 and cysteine 16 are joined by a disulfide bond.

The protein belongs to the glutaredoxin family.

It is found in the cytoplasm. In terms of biological role, acts to maintain redox homeostasis; functions as a protein disulfide reductase. In Methanothermobacter thermautotrophicus (strain ATCC 29096 / DSM 1053 / JCM 10044 / NBRC 100330 / Delta H) (Methanobacterium thermoautotrophicum), this protein is Probable Thioredoxin.